The sequence spans 152 residues: Adrenodoxin-like protein 2, mitochondrial (152 aa).

A mitochondrion-targeting transit peptide spans 1 to 29; sequence MLVINSCRAASRLALRSLNLRSPIATRTF. In terms of domain architecture, 2Fe-2S ferredoxin-type spans 41 to 146; sequence VNITFVRANG…GLEVHVPSTI (106 aa). Residues Cys-80, Cys-86, Cys-89, and Cys-127 each contribute to the [2Fe-2S] cluster site.

This sequence belongs to the adrenodoxin/putidaredoxin family. It depends on [2Fe-2S] cluster as a cofactor.

The protein resides in the mitochondrion. Required for ecdysteroidogenesis in the prothoracic gland which is necessary for larval to pupal transition. The chain is Adrenodoxin-like protein 2, mitochondrial from Drosophila melanogaster (Fruit fly).